A 203-amino-acid chain; its full sequence is Probable GTP-binding protein EngB (203 aa).

The 174-residue stretch at Gly22–Gln195 folds into the EngB-type G domain. GTP-binding positions include Gly30–Ser37, Gly57–Thr61, Asp75–Gly78, Thr142–Asp145, and Val174–Ser176. The Mg(2+) site is built by Ser37 and Thr59.

It belongs to the TRAFAC class TrmE-Era-EngA-EngB-Septin-like GTPase superfamily. EngB GTPase family. Mg(2+) serves as cofactor.

In terms of biological role, necessary for normal cell division and for the maintenance of normal septation. The polypeptide is Probable GTP-binding protein EngB (Clostridioides difficile (strain 630) (Peptoclostridium difficile)).